The sequence spans 143 residues: MVAVVLVGHGSRLPYSRQVVEKIAEYVEEMGDFETVEVGFMELCEPTVQEAVKKAAESGVDKIVVVPVFLAHGVHTKRDIPKMLGLEPEWDDDEDDHDHHHHHHRDYTPVDVDAEIVYAEPLGADPRIAEIVIDRIKEALGEE.

His9 functions as the Proton acceptor in the catalytic mechanism. A Co(2+)-binding site is contributed by His9. Ni(2+) is bound at residue His9. Substrate-binding positions include Glu45 and 70–75 (LAHGVH). His75 is a Co(2+) binding site. Ni(2+) is bound at residue His75.

The protein belongs to the CbiX family. CbiXS subfamily. Homotetramer; dimer of dimers.

The enzyme catalyses Co-sirohydrochlorin + 2 H(+) = sirohydrochlorin + Co(2+). The catalysed reaction is Ni-sirohydrochlorin + 2 H(+) = sirohydrochlorin + Ni(2+). The protein operates within cofactor biosynthesis; adenosylcobalamin biosynthesis; cob(II)yrinate a,c-diamide from sirohydrochlorin (anaerobic route): step 1/10. Its function is as follows. Catalyzes the insertion of Co(2+) into sirohydrochlorin as part of the anaerobic pathway to cobalamin biosynthesis. Involved in the biosynthesis of the unique nickel-containing tetrapyrrole coenzyme F430, the prosthetic group of methyl-coenzyme M reductase (MCR), which plays a key role in methanogenesis and anaerobic methane oxidation. Catalyzes the insertion of Ni(2+) into sirohydrochlorin to yield Ni-sirohydrochlorin. This Methanopyrus kandleri (strain AV19 / DSM 6324 / JCM 9639 / NBRC 100938) protein is Sirohydrochlorin cobaltochelatase.